Reading from the N-terminus, the 368-residue chain is Phospho-N-acetylmuramoyl-pentapeptide-transferase (368 aa).

Transmembrane regions (helical) follow at residues 23–43 (YLTFRASAAAITALLIIIFAG), 72–92 (VPTMGGLMIIFAIEVSAFLWA), 98–118 (HVWLIMLAVFWMGLIGFIDDY), 139–159 (VTLGLVIGFYTWNDPVFSVLL), 170–190 (LSVDYGIFYIPVVIFIITAVS), 201–221 (GLAAGNAAIVTFALGVFAYLC), 238–258 (AGEVAVVSMAIVMACVGFLWF), 281–301 (VIALMIKQELLLPVLAGVFFV), and 345–365 (KIVIRFWIISILLFLTSLMTL).

Belongs to the glycosyltransferase 4 family. MraY subfamily. Requires Mg(2+) as cofactor.

Its subcellular location is the cell inner membrane. The catalysed reaction is UDP-N-acetyl-alpha-D-muramoyl-L-alanyl-gamma-D-glutamyl-meso-2,6-diaminopimeloyl-D-alanyl-D-alanine + di-trans,octa-cis-undecaprenyl phosphate = di-trans,octa-cis-undecaprenyl diphospho-N-acetyl-alpha-D-muramoyl-L-alanyl-D-glutamyl-meso-2,6-diaminopimeloyl-D-alanyl-D-alanine + UMP. Its pathway is cell wall biogenesis; peptidoglycan biosynthesis. Catalyzes the initial step of the lipid cycle reactions in the biosynthesis of the cell wall peptidoglycan: transfers peptidoglycan precursor phospho-MurNAc-pentapeptide from UDP-MurNAc-pentapeptide onto the lipid carrier undecaprenyl phosphate, yielding undecaprenyl-pyrophosphoryl-MurNAc-pentapeptide, known as lipid I. This Chlorobaculum tepidum (strain ATCC 49652 / DSM 12025 / NBRC 103806 / TLS) (Chlorobium tepidum) protein is Phospho-N-acetylmuramoyl-pentapeptide-transferase.